The chain runs to 753 residues: 5-methyltetrahydropteroyltriglutamate--homocysteine methyltransferase (753 aa).

5-methyltetrahydropteroyltri-L-glutamate is bound by residues 17–20 (RELK) and lysine 117. L-homocysteine is bound by residues 431 to 433 (IGS) and glutamate 484. L-methionine contacts are provided by residues 431–433 (IGS) and glutamate 484. Residues 515 to 516 (RC) and tryptophan 561 each bind 5-methyltetrahydropteroyltri-L-glutamate. Aspartate 599 serves as a coordination point for L-homocysteine. Aspartate 599 contributes to the L-methionine binding site. Glutamate 605 contributes to the 5-methyltetrahydropteroyltri-L-glutamate binding site. 3 residues coordinate Zn(2+): histidine 641, cysteine 643, and glutamate 665. The Proton donor role is filled by histidine 694. Residue cysteine 726 participates in Zn(2+) binding.

The protein belongs to the vitamin-B12 independent methionine synthase family. Requires Zn(2+) as cofactor.

It carries out the reaction 5-methyltetrahydropteroyltri-L-glutamate + L-homocysteine = tetrahydropteroyltri-L-glutamate + L-methionine. It participates in amino-acid biosynthesis; L-methionine biosynthesis via de novo pathway; L-methionine from L-homocysteine (MetE route): step 1/1. Functionally, catalyzes the transfer of a methyl group from 5-methyltetrahydrofolate to homocysteine resulting in methionine formation. In Escherichia coli (strain UTI89 / UPEC), this protein is 5-methyltetrahydropteroyltriglutamate--homocysteine methyltransferase.